A 142-amino-acid polypeptide reads, in one-letter code: Large ribosomal subunit protein uL11 (142 aa).

This sequence belongs to the universal ribosomal protein uL11 family. Part of the ribosomal stalk of the 50S ribosomal subunit. Interacts with L10 and the large rRNA to form the base of the stalk. L10 forms an elongated spine to which L12 dimers bind in a sequential fashion forming a multimeric L10(L12)X complex. In terms of processing, one or more lysine residues are methylated.

Its function is as follows. Forms part of the ribosomal stalk which helps the ribosome interact with GTP-bound translation factors. This is Large ribosomal subunit protein uL11 from Idiomarina loihiensis (strain ATCC BAA-735 / DSM 15497 / L2-TR).